Reading from the N-terminus, the 274-residue chain is tRNA (guanine-N(1)-)-methyltransferase (274 aa).

S-adenosyl-L-methionine is bound by residues Gly-116 and 140–145; that span reads LGDYVL.

The protein belongs to the RNA methyltransferase TrmD family. In terms of assembly, homodimer.

It localises to the cytoplasm. The enzyme catalyses guanosine(37) in tRNA + S-adenosyl-L-methionine = N(1)-methylguanosine(37) in tRNA + S-adenosyl-L-homocysteine + H(+). Functionally, specifically methylates guanosine-37 in various tRNAs. This chain is tRNA (guanine-N(1)-)-methyltransferase, found in Arthrobacter sp. (strain FB24).